A 72-amino-acid chain; its full sequence is Translation initiation factor IF-1 (72 aa).

One can recognise an S1-like domain in the interval Met-1–Lys-72.

Belongs to the IF-1 family. In terms of assembly, component of the 30S ribosomal translation pre-initiation complex which assembles on the 30S ribosome in the order IF-2 and IF-3, IF-1 and N-formylmethionyl-tRNA(fMet); mRNA recruitment can occur at any time during PIC assembly.

The protein resides in the cytoplasm. One of the essential components for the initiation of protein synthesis. Stabilizes the binding of IF-2 and IF-3 on the 30S subunit to which N-formylmethionyl-tRNA(fMet) subsequently binds. Helps modulate mRNA selection, yielding the 30S pre-initiation complex (PIC). Upon addition of the 50S ribosomal subunit IF-1, IF-2 and IF-3 are released leaving the mature 70S translation initiation complex. The chain is Translation initiation factor IF-1 from Burkholderia thailandensis (strain ATCC 700388 / DSM 13276 / CCUG 48851 / CIP 106301 / E264).